Consider the following 344-residue polypeptide: Lipase chaperone (344 aa).

The helical transmembrane segment at 14-34 (AAIYGGVGLAAVAGVAMWSGA) threads the bilayer.

The protein belongs to the lipase chaperone family.

The protein localises to the cell inner membrane. Functionally, may be involved in the folding of the extracellular lipase during its passage through the periplasm. This Burkholderia cenocepacia (strain ATCC BAA-245 / DSM 16553 / LMG 16656 / NCTC 13227 / J2315 / CF5610) (Burkholderia cepacia (strain J2315)) protein is Lipase chaperone.